A 346-amino-acid chain; its full sequence is Cell division protein ZipA (346 aa).

Topologically, residues 1–6 (MEDLQL) are periplasmic. The helical transmembrane segment at 7–27 (VLFVLGAIAIVAVLVHGFWSI) threads the bilayer. The Cytoplasmic segment spans residues 28 to 346 (RRQQPKSLKD…DYLHRIRANA (319 aa)). Disordered regions lie at residues 76–103 (ANEAHTPEAPAFNPYLKQEAKTQPQPVE) and 121–145 (QPDFSLQSPTAKEQHRGPKASRQEP).

The protein belongs to the ZipA family. Interacts with FtsZ via their C-terminal domains.

It localises to the cell inner membrane. Its function is as follows. Essential cell division protein that stabilizes the FtsZ protofilaments by cross-linking them and that serves as a cytoplasmic membrane anchor for the Z ring. Also required for the recruitment to the septal ring of downstream cell division proteins. The protein is Cell division protein ZipA of Shewanella sp. (strain MR-4).